A 417-amino-acid chain; its full sequence is Cysteate synthase (417 aa).

Lysine 102 is modified (N6-(pyridoxal phosphate)lysine). Residues asparagine 128 and threonine 380 each contribute to the pyridoxal 5'-phosphate site.

Belongs to the threonine synthase family. Cysteate synthase subfamily. In terms of assembly, homotrimer. Pyridoxal 5'-phosphate serves as cofactor.

It carries out the reaction O-phospho-L-serine + sulfite + H(+) = L-cysteate + phosphate. It functions in the pathway cofactor biosynthesis; coenzyme M biosynthesis. Specifically catalyzes the beta-elimination of phosphate from L-phosphoserine and the beta-addition of sulfite to the dehydroalanine intermediate to produce L-cysteate. This is Cysteate synthase from Methanocella arvoryzae (strain DSM 22066 / NBRC 105507 / MRE50).